The chain runs to 76 residues: Sec-independent protein translocase protein TatA (76 aa).

A helical transmembrane segment spans residues 1–21 (MGGISITQLLIIVAIVVLLFG). Residues 45 to 76 (DDNKEKDAEFKSLSDDSETTAKTEKAKDKEQA) are disordered.

It belongs to the TatA/E family. In terms of assembly, the Tat system comprises two distinct complexes: a TatABC complex, containing multiple copies of TatA, TatB and TatC subunits, and a separate TatA complex, containing only TatA subunits. Substrates initially bind to the TatABC complex, which probably triggers association of the separate TatA complex to form the active translocon.

It is found in the cell inner membrane. In terms of biological role, part of the twin-arginine translocation (Tat) system that transports large folded proteins containing a characteristic twin-arginine motif in their signal peptide across membranes. TatA could form the protein-conducting channel of the Tat system. The polypeptide is Sec-independent protein translocase protein TatA (Pasteurella multocida (strain Pm70)).